A 1067-amino-acid chain; its full sequence is Cadmium/zinc-transporting ATPase HMA2 (1067 aa).

The HMA domain maps to 9-75; sequence QKSYFDVLGI…ALNQARLEAS (67 aa). 8 helical membrane-spanning segments follow: residues 94 to 114, 117 to 137, 140 to 160, 162 to 182, 313 to 333, 342 to 362, 649 to 669, and 673 to 693; these read YVLL…WHPL, FALV…IAAI, LTLD…ALKD, SEAG…TRAS, YTPA…IAKA, LALV…TPIA, IIVN…LAFA, and LIWA…MYSM. Disordered regions lie at residues 711-739, 760-790, and 960-996; these read HHGS…HHCS, HDHH…SHGH, and NDTH…GHHP. Residues 724–735 show a composition bias toward basic residues; the sequence is HGSHAKKNHGVS. Basic and acidic residues-rich tracts occupy residues 760–774 and 975–996; these read HDHH…EPAH and SSDH…GHHP.

This sequence belongs to the cation transport ATPase (P-type) (TC 3.A.3) family. Type IB subfamily. In terms of tissue distribution, in roots, localizes at the pericycle cells. In nodes, localizes in the phloem parenchyma and companion cells of both enlarged and diffuse vascular bundles.

Its subcellular location is the cell membrane. The catalysed reaction is Zn(2+)(in) + ATP + H2O = Zn(2+)(out) + ADP + phosphate + H(+). The enzyme catalyses Cd(2+)(in) + ATP + H2O = Cd(2+)(out) + ADP + phosphate + H(+). In terms of biological role, zinc/cadmium transporter that plays an essential role in promoting translocation of zinc and cadmium from roots to shoots. May control cadmium loading into xylem. In roots, transports zinc and cadmium from the apoplast to the symplast to facilitate translocation via the phloem. In nodes, functions to load zinc and cadmium to the phloem for the preferential distribution to the upper nodes and panicles. This chain is Cadmium/zinc-transporting ATPase HMA2, found in Oryza sativa subsp. japonica (Rice).